A 319-amino-acid polypeptide reads, in one-letter code: Tetrahydromethanopterin S-methyltransferase subunit H (319 aa).

It belongs to the MtrH family. In terms of assembly, the complex is composed of 8 subunits; MtrA, MtrB, MtrC, MtrD, MtrE, MtrF, MtrG and MtrH.

The catalysed reaction is 5-methyl-5,6,7,8-tetrahydromethanopterin + coenzyme M + 2 Na(+)(in) = 5,6,7,8-tetrahydromethanopterin + methyl-coenzyme M + 2 Na(+)(out). It participates in one-carbon metabolism; methanogenesis from CO(2); methyl-coenzyme M from 5,10-methylene-5,6,7,8-tetrahydromethanopterin: step 2/2. Its function is as follows. Part of a complex that catalyzes the formation of methyl-coenzyme M and tetrahydromethanopterin from coenzyme M and methyl-tetrahydromethanopterin. This is an energy-conserving, sodium-ion translocating step. MtrH catalyzes the transfer of the methyl group from methyl-tetrahydromethanopterin to the corrinoid prosthetic group of MtrA. The protein is Tetrahydromethanopterin S-methyltransferase subunit H of Methanocaldococcus jannaschii (strain ATCC 43067 / DSM 2661 / JAL-1 / JCM 10045 / NBRC 100440) (Methanococcus jannaschii).